We begin with the raw amino-acid sequence, 338 residues long: Glyceraldehyde-3-phosphate dehydrogenase 2 (338 aa).

Residues 13-14 (RI), Asp-35, and Arg-80 contribute to the NAD(+) site. Residues 151–153 (SCT), Thr-182, 211–212 (TG), and Arg-234 each bind D-glyceraldehyde 3-phosphate. Cys-152 (nucleophile) is an active-site residue. Residue Asn-316 participates in NAD(+) binding.

Belongs to the glyceraldehyde-3-phosphate dehydrogenase family. In terms of assembly, homotetramer.

The protein localises to the cytoplasm. It catalyses the reaction D-glyceraldehyde 3-phosphate + phosphate + NAD(+) = (2R)-3-phospho-glyceroyl phosphate + NADH + H(+). Its pathway is carbohydrate degradation; glycolysis; pyruvate from D-glyceraldehyde 3-phosphate: step 1/5. Its activity is regulated as follows. Inhibited by koningic acid through the interaction of cysteine residues with koningic acid even at very low concentrations. The polypeptide is Glyceraldehyde-3-phosphate dehydrogenase 2 (gpd2) (Trichoderma koningii (Hypocrea koningii)).